The following is a 253-amino-acid chain: MRILLSNDDGIHAPGIQTLAKALREFAEVQVVAPDRNRSGASNSLTLESSLRTFTFENGDIAVQMGTPTDCVYLGVNALMRPRPDIVVSGINAGPNLGDDVIYSGTVAAAMEGRHLGFPALAVSLNGYQHYDTAAAVTCTILRALSREPLRTGRILNINVPDLPLDQIKGIRVTRCGNRHPADQVIPQKDPRGNTLYWIGPPGDKRDAGPGTDFAAVDEGYVSVTPLHVDLTAHQAHEVVSDWLERVGVDGQW.

Residues aspartate 8, aspartate 9, serine 39, and asparagine 92 each coordinate a divalent metal cation.

Belongs to the SurE nucleotidase family. A divalent metal cation is required as a cofactor.

It localises to the cytoplasm. The catalysed reaction is a ribonucleoside 5'-phosphate + H2O = a ribonucleoside + phosphate. It catalyses the reaction a ribonucleoside 3'-phosphate + H2O = a ribonucleoside + phosphate. The enzyme catalyses [phosphate](n) + H2O = [phosphate](n-1) + phosphate + H(+). In terms of biological role, nucleotidase with a broad substrate specificity as it can dephosphorylate various ribo- and deoxyribonucleoside 5'-monophosphates and ribonucleoside 3'-monophosphates with highest affinity to 3'-AMP. Also hydrolyzes polyphosphate (exopolyphosphatase activity) with the preference for short-chain-length substrates (P20-25). Might be involved in the regulation of dNTP and NTP pools, and in the turnover of 3'-mononucleotides produced by numerous intracellular RNases (T1, T2, and F) during the degradation of various RNAs. In Klebsiella pneumoniae (strain 342), this protein is 5'/3'-nucleotidase SurE.